The chain runs to 210 residues: Putative 3-methyladenine DNA glycosylase (210 aa).

It belongs to the DNA glycosylase MPG family.

The sequence is that of Putative 3-methyladenine DNA glycosylase from Corynebacterium glutamicum (strain R).